The chain runs to 413 residues: 3-hydroxy-3-methylglutaryl-coenzyme A reductase (413 aa).

Catalysis depends on charge relay system residues Glu-106 and Asp-312. His-408 functions as the Proton donor in the catalytic mechanism.

This sequence belongs to the HMG-CoA reductase family.

The catalysed reaction is (R)-mevalonate + 2 NADP(+) + CoA = (3S)-3-hydroxy-3-methylglutaryl-CoA + 2 NADPH + 2 H(+). It functions in the pathway metabolic intermediate biosynthesis; (R)-mevalonate biosynthesis; (R)-mevalonate from acetyl-CoA: step 3/3. Functionally, converts HMG-CoA to mevalonate. The protein is 3-hydroxy-3-methylglutaryl-coenzyme A reductase (hmgA) of Pyrococcus horikoshii (strain ATCC 700860 / DSM 12428 / JCM 9974 / NBRC 100139 / OT-3).